The following is a 265-amino-acid chain: Glutamate racemase (265 aa).

Residues 12 to 13 (DS) and 44 to 45 (YG) contribute to the substrate site. Cysteine 75 (proton donor/acceptor) is an active-site residue. Substrate is bound at residue 76-77 (NT). The Proton donor/acceptor role is filled by cysteine 186. 187–188 (TH) serves as a coordination point for substrate.

The protein belongs to the aspartate/glutamate racemases family.

It carries out the reaction L-glutamate = D-glutamate. The protein operates within cell wall biogenesis; peptidoglycan biosynthesis. Its function is as follows. Provides the (R)-glutamate required for cell wall biosynthesis. The polypeptide is Glutamate racemase (Pseudomonas putida (strain W619)).